Consider the following 115-residue polypeptide: MGTGLRSQSLREPRPSYGKLQEPWGRPQEGQLRRALSLRQGQEKSRSQGLERGTEGPDATAQERVPGSLGDTEQLIQAQRRGSRWWLRRYQQVRRRWESFVAIFPSVTLSQPASP.

The disordered stretch occupies residues 1-74; the sequence is MGTGLRSQSL…VPGSLGDTEQ (74 aa).

This is an uncharacterized protein from Homo sapiens (Human).